Here is a 127-residue protein sequence, read N- to C-terminus: Aspartate 1-decarboxylase (127 aa).

The active-site Schiff-base intermediate with substrate; via pyruvic acid is serine 25. Position 25 is a pyruvic acid (Ser) (serine 25). Threonine 57 contributes to the substrate binding site. Tyrosine 58 acts as the Proton donor in catalysis. 73 to 75 lines the substrate pocket; that stretch reads GAA.

This sequence belongs to the PanD family. As to quaternary structure, heterooctamer of four alpha and four beta subunits. Pyruvate serves as cofactor. Is synthesized initially as an inactive proenzyme, which is activated by self-cleavage at a specific serine bond to produce a beta-subunit with a hydroxyl group at its C-terminus and an alpha-subunit with a pyruvoyl group at its N-terminus.

Its subcellular location is the cytoplasm. It carries out the reaction L-aspartate + H(+) = beta-alanine + CO2. Its pathway is cofactor biosynthesis; (R)-pantothenate biosynthesis; beta-alanine from L-aspartate: step 1/1. In terms of biological role, catalyzes the pyruvoyl-dependent decarboxylation of aspartate to produce beta-alanine. This is Aspartate 1-decarboxylase from Staphylococcus carnosus (strain TM300).